The following is a 339-amino-acid chain: Anthranilate phosphoribosyltransferase (339 aa).

Residues Gly80, Gly83–Asp84, Thr88, Asn90–Thr93, Lys108–Ser116, and Ser120 contribute to the 5-phospho-alpha-D-ribose 1-diphosphate site. Gly80 lines the anthranilate pocket. A Mg(2+)-binding site is contributed by Ser92. Asn111 contacts anthranilate. Residue Arg166 participates in anthranilate binding. The Mg(2+) site is built by Asp225 and Glu226.

Belongs to the anthranilate phosphoribosyltransferase family. Homodimer. Requires Mg(2+) as cofactor.

The catalysed reaction is N-(5-phospho-beta-D-ribosyl)anthranilate + diphosphate = 5-phospho-alpha-D-ribose 1-diphosphate + anthranilate. It functions in the pathway amino-acid biosynthesis; L-tryptophan biosynthesis; L-tryptophan from chorismate: step 2/5. Catalyzes the transfer of the phosphoribosyl group of 5-phosphorylribose-1-pyrophosphate (PRPP) to anthranilate to yield N-(5'-phosphoribosyl)-anthranilate (PRA). The chain is Anthranilate phosphoribosyltransferase from Alkaliphilus metalliredigens (strain QYMF).